A 170-amino-acid polypeptide reads, in one-letter code: Crossover junction endodeoxyribonuclease RuvC (170 aa).

Active-site residues include Asp9, Glu70, and Asp145. Asp9, Glu70, and Asp145 together coordinate Mg(2+).

Belongs to the RuvC family. Homodimer which binds Holliday junction (HJ) DNA. The HJ becomes 2-fold symmetrical on binding to RuvC with unstacked arms; it has a different conformation from HJ DNA in complex with RuvA. In the full resolvosome a probable DNA-RuvA(4)-RuvB(12)-RuvC(2) complex forms which resolves the HJ. The cofactor is Mg(2+).

Its subcellular location is the cytoplasm. It carries out the reaction Endonucleolytic cleavage at a junction such as a reciprocal single-stranded crossover between two homologous DNA duplexes (Holliday junction).. The RuvA-RuvB-RuvC complex processes Holliday junction (HJ) DNA during genetic recombination and DNA repair. Endonuclease that resolves HJ intermediates. Cleaves cruciform DNA by making single-stranded nicks across the HJ at symmetrical positions within the homologous arms, yielding a 5'-phosphate and a 3'-hydroxyl group; requires a central core of homology in the junction. The consensus cleavage sequence is 5'-(A/T)TT(C/G)-3'. Cleavage occurs on the 3'-side of the TT dinucleotide at the point of strand exchange. HJ branch migration catalyzed by RuvA-RuvB allows RuvC to scan DNA until it finds its consensus sequence, where it cleaves and resolves the cruciform DNA. The sequence is that of Crossover junction endodeoxyribonuclease RuvC from Chlamydia trachomatis serovar L2 (strain ATCC VR-902B / DSM 19102 / 434/Bu).